Here is a 144-residue protein sequence, read N- to C-terminus: Maximins 7/H6 (144 aa).

Residues 1–18 (MNFKYIVAVSFLIASAYA) form the signal peptide. The propeptide occupies 19-43 (RSEENDEQSLSQRDILEEESLREIR). Asn-70 carries the post-translational modification Asparagine amide. Residues 74–123 (TAEDHEVMKRLEAVMRDLDSLDYPEEAAERETRGFNQEEIANLFTKKEKR) constitute a propeptide that is removed on maturation. At Leu-143 the chain carries Leucine amide.

Belongs to the bombinin family. As to expression, expressed by the skin glands.

It localises to the secreted. Its function is as follows. Maximin-7 shows antimicrobial activity against bacteria and against the fungus C.albicans. It has little hemolytic activity. Functionally, maximin-H6 shows antimicrobial activity against bacteria and against the fungus C.albicans. Shows strong hemolytic activity. The protein is Maximins 7/H6 of Bombina maxima (Giant fire-bellied toad).